We begin with the raw amino-acid sequence, 889 residues long: Chromatin structure-remodeling complex subunit RSC2 (889 aa).

Positions 12–120 (QNSSALYKDL…KYLKDTIYPN (109 aa)) constitute a Bromo 1 domain. The disordered stretch occupies residues 151–268 (EKAEEVARAN…QVSRTQVKRG (118 aa)). A compositionally biased stretch (low complexity) spans 158 to 174 (RANAARAESSSSMNSTE). Residues 197–209 (NNDEDYEATDMDI) show a composition bias toward acidic residues. Residues 210–222 (DNPKDADFPDLIR) show a composition bias toward basic and acidic residues. The segment covering 241-250 (STTPSHSGTP) has biased composition (polar residues). A compositionally biased stretch (basic residues) spans 255–268 (PRHRQVSRTQVKRG). The 103-residue stretch at 280-382 (RMKNVMKVLK…KTFTSLARFE (103 aa)) folds into the Bromo 2 domain. Residues 408 to 526 (ISYHVGDWAL…ESDKIFNKIR (119 aa)) enclose the BAH domain. Residues 601–624 (GEYATSDDCPRYIIRPNDSPEEGQ) form a disordered region. Tyr-612 bears the Phosphotyrosine mark. Ser-682 is subject to Phosphoserine. The segment at 831-865 (EVEETMEDVTGKDKDDDGLEPDVENEKESLPGPFV) is disordered.

Belongs to the RSC1 family. As to quaternary structure, component of the two forms of the RSC complex composed of at least either RSC1 or RSC2, and ARP7, ARP9, LDB7, NPL6, RSC3, RSC30, RSC4, RSC58, RSC6, RSC8, RSC9, SFH1, STH1, HTL1 and probably RTT102. The complexes interact with histone and histone variant components of centromeric chromatin.

The protein localises to the nucleus. In terms of biological role, component of the chromatin structure remodeling complex (RSC), which is involved in transcription regulation and nucleosome positioning. RSC is responsible for the transfer of a histone octamer from a nucleosome core particle to naked DNA. The reaction requires ATP and involves an activated RSC-nucleosome intermediate. Remodeling reaction also involves DNA translocation, DNA twist and conformational change. As a reconfigurer of centromeric and flanking nucleosomes, RSC complex is required both for proper kinetochore function in chromosome segregation and, via a PKC1-dependent signaling pathway, for organization of the cellular cytoskeleton. This subunit is involved in meiotic sporulation through regulating IME2 expression, and is also essential for 2-micron plasmid maintenance and for normal REP1 protein localization. This is Chromatin structure-remodeling complex subunit RSC2 (RSC2) from Saccharomyces cerevisiae (strain ATCC 204508 / S288c) (Baker's yeast).